Consider the following 126-residue polypeptide: Large ribosomal subunit protein bL12 (126 aa).

The protein belongs to the bacterial ribosomal protein bL12 family. As to quaternary structure, homodimer. Part of the ribosomal stalk of the 50S ribosomal subunit. Forms a multimeric L10(L12)X complex, where L10 forms an elongated spine to which 2 to 4 L12 dimers bind in a sequential fashion. Binds GTP-bound translation factors.

Forms part of the ribosomal stalk which helps the ribosome interact with GTP-bound translation factors. Is thus essential for accurate translation. The polypeptide is Large ribosomal subunit protein bL12 (Tropheryma whipplei (strain TW08/27) (Whipple's bacillus)).